A 165-amino-acid polypeptide reads, in one-letter code: Cyanate hydratase (165 aa).

Residues 1-20 are disordered; it reads MAQNKANTVSQLQSLKNKSG. Residues Arg-90, Glu-93, and Ser-116 contribute to the active site.

The protein belongs to the cyanase family.

The catalysed reaction is cyanate + hydrogencarbonate + 3 H(+) = NH4(+) + 2 CO2. Functionally, catalyzes the reaction of cyanate with bicarbonate to produce ammonia and carbon dioxide. This is Cyanate hydratase from Medicago truncatula (Barrel medic).